The sequence spans 115 residues: MTRNDKRRIRHKRIVKKIRLTNLNNRVVLIVIKSLKNISVQAWDFSKNVVLTSSSSLQLKLKNGNKENAKLVGMDIATKLIKLNQKDVVFDTGGSKYHGRIAALAEGARAKGLNF.

This sequence belongs to the universal ribosomal protein uL18 family. Part of the 50S ribosomal subunit; part of the 5S rRNA/L5/L18/L25 subcomplex. Contacts the 5S and 23S rRNAs.

Functionally, this is one of the proteins that bind and probably mediate the attachment of the 5S RNA into the large ribosomal subunit, where it forms part of the central protuberance. The chain is Large ribosomal subunit protein uL18 from Mycoplasma genitalium (strain ATCC 33530 / DSM 19775 / NCTC 10195 / G37) (Mycoplasmoides genitalium).